We begin with the raw amino-acid sequence, 637 residues long: ATP-dependent rRNA helicase SPB4 (637 aa).

The Q motif signature appears at 10–38 (WENLRVDLEPWLKDAIRSLNYPTMTPVQA). The 196-residue stretch at 41-236 (IPLLSGNKDV…RTGMNNPVKL (196 aa)) folds into the Helicase ATP-binding domain. 54-61 (AVTGSGKT) contacts ATP. Residues 184–187 (DEAD) carry the DEAD box motif. The Helicase C-terminal domain maps to 266 to 444 (KLTTMLQMLR…KFQKKLRKYM (179 aa)). Residues 528 to 597 (SAEKARLENL…QLEAEQERGG (70 aa)) adopt a coiled-coil conformation. The disordered stretch occupies residues 554–637 (LKVKNEAWSS…GVLQGSFDDL (84 aa)). Composition is skewed to basic and acidic residues over residues 564 to 576 (KTEK…ERKE) and 583 to 598 (EAIE…RGGL). Gly residues predominate over residues 621 to 630 (NGGGGGGGVL).

It belongs to the DEAD box helicase family. DDX55/SPB4 subfamily. Component of pre-60S ribosomal complexes.

Its subcellular location is the nucleus. The protein localises to the nucleolus. The enzyme catalyses ATP + H2O = ADP + phosphate + H(+). Functionally, ATP-binding RNA helicase involved in the biogenesis of 60S ribosomal subunits. Binds 90S pre-ribosomal particles and dissociates from pre-60S ribosomal particles after processing of 27SB pre-rRNA. Required for the normal formation of 18S rRNA through the processing of pre-rRNAs at sites A0, A1 and A2, and the normal formation of 25S and 5.8S rRNAs through the processing of pre-rRNAs at sites C1 and C2. The sequence is that of ATP-dependent rRNA helicase SPB4 from Lodderomyces elongisporus (strain ATCC 11503 / CBS 2605 / JCM 1781 / NBRC 1676 / NRRL YB-4239) (Yeast).